The sequence spans 239 residues: NAD(P)H-hydrate epimerase (239 aa).

One can recognise a YjeF N-terminal domain in the interval 14 to 220 (AAALDQELMS…EMAEQYNLDI (207 aa)). 64–68 (NNGGD) lines the (6S)-NADPHX pocket. Positions 65 and 126 each coordinate K(+). Residues 130-136 (GFSFSGE) and aspartate 159 contribute to the (6S)-NADPHX site. Serine 162 is a K(+) binding site.

Belongs to the NnrE/AIBP family. K(+) is required as a cofactor.

It localises to the cytoplasm. It is found in the mitochondrion. It carries out the reaction (6R)-NADHX = (6S)-NADHX. The catalysed reaction is (6R)-NADPHX = (6S)-NADPHX. Functionally, catalyzes the epimerization of the S- and R-forms of NAD(P)HX, a damaged form of NAD(P)H that is a result of enzymatic or heat-dependent hydration. This is a prerequisite for the S-specific NAD(P)H-hydrate dehydratase to allow the repair of both epimers of NAD(P)HX. The sequence is that of NAD(P)H-hydrate epimerase from Phaeosphaeria nodorum (strain SN15 / ATCC MYA-4574 / FGSC 10173) (Glume blotch fungus).